A 370-amino-acid chain; its full sequence is 4-hydroxy-3-methylbut-2-en-1-yl diphosphate synthase (flavodoxin) (370 aa).

[4Fe-4S] cluster is bound by residues Cys271, Cys274, Cys306, and Glu313.

It belongs to the IspG family. [4Fe-4S] cluster is required as a cofactor.

The catalysed reaction is (2E)-4-hydroxy-3-methylbut-2-enyl diphosphate + oxidized [flavodoxin] + H2O + 2 H(+) = 2-C-methyl-D-erythritol 2,4-cyclic diphosphate + reduced [flavodoxin]. It functions in the pathway isoprenoid biosynthesis; isopentenyl diphosphate biosynthesis via DXP pathway; isopentenyl diphosphate from 1-deoxy-D-xylulose 5-phosphate: step 5/6. Converts 2C-methyl-D-erythritol 2,4-cyclodiphosphate (ME-2,4cPP) into 1-hydroxy-2-methyl-2-(E)-butenyl 4-diphosphate. This Actinobacillus pleuropneumoniae serotype 5b (strain L20) protein is 4-hydroxy-3-methylbut-2-en-1-yl diphosphate synthase (flavodoxin).